The primary structure comprises 150 residues: UPF0178 protein Bcep18194_A4809 (150 aa).

The protein belongs to the UPF0178 family.

The chain is UPF0178 protein Bcep18194_A4809 from Burkholderia lata (strain ATCC 17760 / DSM 23089 / LMG 22485 / NCIMB 9086 / R18194 / 383).